The sequence spans 426 residues: Glutamate-1-semialdehyde 2,1-aminomutase (426 aa).

Residue Lys-265 is modified to N6-(pyridoxal phosphate)lysine.

Belongs to the class-III pyridoxal-phosphate-dependent aminotransferase family. HemL subfamily. In terms of assembly, homodimer. Pyridoxal 5'-phosphate is required as a cofactor.

It localises to the cytoplasm. The catalysed reaction is (S)-4-amino-5-oxopentanoate = 5-aminolevulinate. Its pathway is porphyrin-containing compound metabolism; protoporphyrin-IX biosynthesis; 5-aminolevulinate from L-glutamyl-tRNA(Glu): step 2/2. The protein is Glutamate-1-semialdehyde 2,1-aminomutase of Hydrogenovibrio crunogenus (strain DSM 25203 / XCL-2) (Thiomicrospira crunogena).